The chain runs to 280 residues: Movement protein (280 aa).

The tract at residues 248–267 (ESEELNVESPPAAIGSSSAS) is disordered. Low complexity predominate over residues 255–267 (ESPPAAIGSSSAS).

It belongs to the cucumovirus movement protein family.

The protein resides in the host cell junction. It localises to the host plasmodesma. Its function is as follows. Transports viral genome to neighboring plant cells directly through plasmosdesmata, without any budding. The movement protein allows efficient cell to cell propagation, by bypassing the host cell wall barrier. Acts by forming a tubular structure at the host plasmodesmata, enlarging it enough to allow free passage of virion capsids. In Cucumis sativus (Cucumber), this protein is Movement protein.